Consider the following 136-residue polypeptide: Cytidine deaminase (136 aa).

In terms of domain architecture, CMP/dCMP-type deaminase spans 1 to 128 (MDVEKLIAES…KLLPGAFSKE (128 aa)). Residue 42–44 (NIE) participates in substrate binding. Cys53 serves as a coordination point for Zn(2+). Glu55 acts as the Proton donor in catalysis. Zn(2+) is bound by residues Cys86 and Cys89.

The protein belongs to the cytidine and deoxycytidylate deaminase family. It depends on Zn(2+) as a cofactor.

The enzyme catalyses cytidine + H2O + H(+) = uridine + NH4(+). It catalyses the reaction 2'-deoxycytidine + H2O + H(+) = 2'-deoxyuridine + NH4(+). In terms of biological role, this enzyme scavenges exogenous and endogenous cytidine and 2'-deoxycytidine for UMP synthesis. In Sporosarcina psychrophila (Bacillus psychrophilus), this protein is Cytidine deaminase (cdd).